The sequence spans 225 residues: Proteasome activator 28 (225 aa).

Belongs to the PA28 family. Homoheptamer. The homoheptamer associates with the 20S proteasome.

It is found in the nucleus. Subunit of the 11S REG (also called PA28) proteasome regulator, a doughnut-shaped homoheptamer which associates with the proteasome. 11S REG-gamma activates preferentially the trypsin-like catalytic subunit of the proteasome. May also be involved in cell cycle regulation. The protein is Proteasome activator 28 (psmE3) of Dictyostelium discoideum (Social amoeba).